The primary structure comprises 251 residues: CDP-diacylglycerol pyrophosphatase (251 aa).

Residues 4–24 (AGLLFLVMIVIAVVAAGIGYW) traverse the membrane as a helical segment.

This sequence belongs to the Cdh family.

It localises to the cell inner membrane. The enzyme catalyses a CDP-1,2-diacyl-sn-glycerol + H2O = a 1,2-diacyl-sn-glycero-3-phosphate + CMP + 2 H(+). Its pathway is phospholipid metabolism; CDP-diacylglycerol degradation; phosphatidate from CDP-diacylglycerol: step 1/1. In Shigella flexneri, this protein is CDP-diacylglycerol pyrophosphatase.